The primary structure comprises 704 residues: Cystathionine beta-synthase cbs-1 (704 aa).

Residues N454, 562–566, and S652 contribute to the pyridoxal 5'-phosphate site; that span reads GTGGT.

This sequence belongs to the cysteine synthase/cystathionine beta-synthase family. Monomer. In terms of assembly, does not bind pyridoxal 5'-phosphate, PLP; which may explain why this isoform has virtually undetectable catalytic activity. Pyridoxal 5'-phosphate is required as a cofactor.

It is found in the cytoplasm. The enzyme catalyses L-homocysteine + L-serine = L,L-cystathionine + H2O. It participates in amino-acid biosynthesis; L-cysteine biosynthesis; L-cysteine from L-homocysteine and L-serine: step 1/2. Functionally, hydro-lyase catalyzing the first step of the transsulfuration pathway, where the hydroxyl group of L-serine is displaced by L-homocysteine in a beta-replacement reaction to form L-cystathionine, the precursor of L-cysteine. Plays a role in maintaining homocysteine homeostasis. Involved in cold-induced somatic longevity mediated by prostaglandin E2 (PGE2) signals from adult germ cells, perhaps acting via a role in the production of hydrogen sulfide (H2S). Required for normal development. This chain is Cystathionine beta-synthase cbs-1, found in Caenorhabditis elegans.